The primary structure comprises 575 residues: UvrABC system protein C (575 aa).

In terms of domain architecture, GIY-YIG spans 15–90; sequence AEPGVYQFEA…IKRHQPRYNV (76 aa). Residues 198–233 form the UVR domain; it reads GVLAEPLRREMETAAASQAFERAASLRDRLEAVETF.

This sequence belongs to the UvrC family. As to quaternary structure, interacts with UvrB in an incision complex.

It localises to the cytoplasm. Its function is as follows. The UvrABC repair system catalyzes the recognition and processing of DNA lesions. UvrC both incises the 5' and 3' sides of the lesion. The N-terminal half is responsible for the 3' incision and the C-terminal half is responsible for the 5' incision. The polypeptide is UvrABC system protein C (Natronomonas pharaonis (strain ATCC 35678 / DSM 2160 / CIP 103997 / JCM 8858 / NBRC 14720 / NCIMB 2260 / Gabara) (Halobacterium pharaonis)).